The primary structure comprises 250 residues: 2,3-bisphosphoglycerate-dependent phosphoglycerate mutase (250 aa).

Substrate-binding positions include 10–17 (RHGESQWN), 23–24 (TG), R62, 89–92 (ERHY), K100, 116–117 (RR), and 185–186 (GN). Residue H11 is the Tele-phosphohistidine intermediate of the active site. Residue E89 is the Proton donor/acceptor of the active site.

It belongs to the phosphoglycerate mutase family. BPG-dependent PGAM subfamily. Homodimer.

It catalyses the reaction (2R)-2-phosphoglycerate = (2R)-3-phosphoglycerate. Its pathway is carbohydrate degradation; glycolysis; pyruvate from D-glyceraldehyde 3-phosphate: step 3/5. In terms of biological role, catalyzes the interconversion of 2-phosphoglycerate and 3-phosphoglycerate. This is 2,3-bisphosphoglycerate-dependent phosphoglycerate mutase from Yersinia enterocolitica serotype O:8 / biotype 1B (strain NCTC 13174 / 8081).